Reading from the N-terminus, the 405-residue chain is Deoxyguanosinetriphosphate triphosphohydrolase-like protein (405 aa).

Residues 75 to 219 enclose the HD domain; that stretch reads RLTHTIEVAQ…AAIADDIAYN (145 aa).

Belongs to the dGTPase family. Type 2 subfamily.

This Rhizobium meliloti (strain 1021) (Ensifer meliloti) protein is Deoxyguanosinetriphosphate triphosphohydrolase-like protein.